The sequence spans 359 residues: Pyruvate dehydrogenase E1 component subunit beta, mitochondrial (359 aa).

Residues 1–30 constitute a mitochondrion transit peptide; sequence MAAVSGLVRRPLREVSGLLKRRFHWTAPAA. Tyr-67 bears the Phosphotyrosine mark. Residue Glu-89 participates in thiamine diphosphate binding. Residues Ile-142, Ala-190, Ile-191, Asp-193, and Asn-195 each contribute to the K(+) site. At Lys-354 the chain carries N6-acetyllysine.

Heterotetramer of two PDHA1 and two PDHB subunits. The heterotetramer interacts with DLAT, and is part of the multimeric pyruvate dehydrogenase complex that contains multiple copies of pyruvate dehydrogenase (E1), dihydrolipoamide acetyltransferase (DLAT, E2) and lipoamide dehydrogenase (DLD, E3). These subunits are bound to an inner core composed of about 48 DLAT and 12 PDHX molecules. Interacts with DLAT. Thiamine diphosphate is required as a cofactor.

The protein resides in the mitochondrion matrix. It carries out the reaction N(6)-[(R)-lipoyl]-L-lysyl-[protein] + pyruvate + H(+) = N(6)-[(R)-S(8)-acetyldihydrolipoyl]-L-lysyl-[protein] + CO2. Its function is as follows. The pyruvate dehydrogenase complex catalyzes the overall conversion of pyruvate to acetyl-CoA and CO(2), and thereby links the glycolytic pathway to the tricarboxylic cycle. In Homo sapiens (Human), this protein is Pyruvate dehydrogenase E1 component subunit beta, mitochondrial (PDHB).